The following is a 61-amino-acid chain: Sec-independent protein translocase protein TatA (61 aa).

Residues 1–21 (MFGIGMPEMLIILVIILIIFG) form a helical membrane-spanning segment.

This sequence belongs to the TatA/E family. In terms of assembly, the Tat system comprises two distinct complexes: a TatABC complex, containing multiple copies of TatA, TatB and TatC subunits, and a separate TatA complex, containing only TatA subunits. Substrates initially bind to the TatABC complex, which probably triggers association of the separate TatA complex to form the active translocon.

The protein resides in the cell inner membrane. In terms of biological role, part of the twin-arginine translocation (Tat) system that transports large folded proteins containing a characteristic twin-arginine motif in their signal peptide across membranes. TatA could form the protein-conducting channel of the Tat system. The polypeptide is Sec-independent protein translocase protein TatA (Syntrophus aciditrophicus (strain SB)).